The following is a 302-amino-acid chain: UPF0761 membrane protein Tola_0461 (302 aa).

A run of 6 helical transmembrane segments spans residues 51–71 (YVSL…LSWL), 111–131 (TTSI…AAID), 150–170 (ITMY…SLLL), 188–208 (LGGG…ILLL), 222–242 (ALLG…GFGY), and 256–276 (ALAG…VVLL).

The protein belongs to the UPF0761 family.

It is found in the cell inner membrane. This Tolumonas auensis (strain DSM 9187 / NBRC 110442 / TA 4) protein is UPF0761 membrane protein Tola_0461.